The sequence spans 204 residues: tRNA (guanine-N(7)-)-methyltransferase (204 aa).

Glutamate 36, glutamate 61, and aspartate 111 together coordinate S-adenosyl-L-methionine. Aspartate 111 is an active-site residue. Residues lysine 115, aspartate 147, and threonine 177 to glutamate 180 contribute to the substrate site.

Belongs to the class I-like SAM-binding methyltransferase superfamily. TrmB family.

It carries out the reaction guanosine(46) in tRNA + S-adenosyl-L-methionine = N(7)-methylguanosine(46) in tRNA + S-adenosyl-L-homocysteine. It functions in the pathway tRNA modification; N(7)-methylguanine-tRNA biosynthesis. Catalyzes the formation of N(7)-methylguanine at position 46 (m7G46) in tRNA. In Chlorobium phaeobacteroides (strain DSM 266 / SMG 266 / 2430), this protein is tRNA (guanine-N(7)-)-methyltransferase.